Reading from the N-terminus, the 267-residue chain is Methylglyoxal reductase DkgB (267 aa).

Catalysis depends on Tyr-39, which acts as the Proton donor. His-97 contributes to the substrate binding site. 179-231 (MTLAYGKALAEPVIKTIAEQHGATPAQVILSWAMQLGYGVIPSSTKAANLASN) provides a ligand contact to NADP(+).

This sequence belongs to the aldo/keto reductase family. Monomer.

The protein localises to the cytoplasm. The enzyme catalyses hydroxyacetone + NADP(+) = methylglyoxal + NADPH + H(+). Functionally, aldo-keto reductase that significantly contributes to cellular methylglyoxal detoxification by catalyzing the NADPH-dependent conversion of methylglyoxal to acetol. The chain is Methylglyoxal reductase DkgB from Yersinia pestis.